A 117-amino-acid polypeptide reads, in one-letter code: Cuticle protein CP1246 (117 aa).

4 tandem repeats follow at residues 1–17 (NYGE…LVQF), 26–43 (AEIG…HVQF), 67–84 (QSYG…NRQF), and 93–110 (VLVG…NVQF).

In terms of tissue distribution, calcified shell.

In Cancer pagurus (Rock crab), this protein is Cuticle protein CP1246.